Reading from the N-terminus, the 113-residue chain is U11-theraphotoxin-Hhn1d (113 aa).

The signal sequence occupies residues 1 to 21 (MNTVRVTFLLVFVVAVSLGQA). The propeptide occupies 22-74 (DKDENRMEMKDKTEQGKSYLHFAENLLLQKLEDVEAKLLEKDSEKSINSRQKR). 3 cysteine pairs are disulfide-bonded: Cys75/Cys90, Cys82/Cys95, and Cys89/Cys110.

It belongs to the neurotoxin 14 (magi-1) family. 01 (HNTX-16) subfamily. In terms of tissue distribution, expressed by the venom gland.

The protein resides in the secreted. Its function is as follows. Probable ion channel inhibitor. The protein is U11-theraphotoxin-Hhn1d of Cyriopagopus hainanus (Chinese bird spider).